The chain runs to 235 residues: Segregation and condensation protein A (235 aa).

Belongs to the ScpA family. Component of a cohesin-like complex composed of ScpA, ScpB and the Smc homodimer, in which ScpA and ScpB bind to the head domain of Smc. The presence of the three proteins is required for the association of the complex with DNA.

Its subcellular location is the cytoplasm. Its function is as follows. Participates in chromosomal partition during cell division. May act via the formation of a condensin-like complex containing Smc and ScpB that pull DNA away from mid-cell into both cell halves. The sequence is that of Segregation and condensation protein A from Streptococcus equi subsp. zooepidemicus (strain MGCS10565).